A 430-amino-acid polypeptide reads, in one-letter code: MQRVQSAVDFSNLLNPSESTAEKRDHSGSPRQQTAQPQQQQQQPQPEADMATVGLLRPNGPLPGAQATEPANELPRPYKCPLCDKAFHRLEHQTRHIRTHTGEKPHACQFPGCSKKFSRSDELTRHSRIHSNPNSRRGNKGQQQQQHPLVHNHGLQPDMMPPPGPKAIRSAPPTAMSSPNVSPPHSYSPYNFAPSGLNPYSHSRSSAGSQSGPDISLLARAAGQVERDGAAHHHFQPRFQFYGNTLHAATASRNQLPGLQAYHMSRSHSHEDHDDHYGQSYRHAKRSRPNSPNSTAPSSPTFSHDSLSPTPDHTPLATPAHSPRLRPHPGLELPPFRNLSLGQQHTTPALAPLEPALDGQFSLPQTPPAAPRSSGMSLTDIISRPDGTQRKLPVPKVAVQDLLGPADGFNPSVRNSSSTSLSGAEMMDRL.

Residues 1–19 (MQRVQSAVDFSNLLNPSES) show a composition bias toward polar residues. Disordered stretches follow at residues 1–77 (MQRV…LPRP), 97–187 (IRTH…PHSY), 265–340 (SRSH…RNLS), and 357–430 (LDGQ…MDRL). A compositionally biased stretch (low complexity) spans 30–46 (PRQQTAQPQQQQQQPQP). C2H2-type zinc fingers lie at residues 78-100 (YKCP…IRTH) and 106-130 (HACQ…SRIH). Positions 97-106 (IRTHTGEKPH) are enriched in basic and acidic residues. 2 stretches are compositionally biased toward polar residues: residues 130 to 147 (HSNP…QQQH) and 175 to 187 (AMSS…PHSY). A compositionally biased stretch (basic and acidic residues) spans 268–277 (HSHEDHDDHY). A compositionally biased stretch (low complexity) spans 289–303 (PNSPNSTAPSSPTFS). Over residues 412–422 (SVRNSSSTSLS) the composition is skewed to polar residues.

It belongs to the creA/MIG C2H2-type zinc-finger protein family.

Its subcellular location is the nucleus. Its function is as follows. Involved in carbon catabolite repression. Represses the transcription of a number of genes by binding to a GC-rich region in their promoter. This Neurospora crassa (strain ATCC 24698 / 74-OR23-1A / CBS 708.71 / DSM 1257 / FGSC 987) protein is DNA-binding protein cre-1 (cre-1).